Here is a 64-residue protein sequence, read N- to C-terminus: MDNKVETGNIDVRLLELLVCPLTKGPLEYDAERSELVSRKARLAYPVRGGIPIMLPSEARSLTE.

This sequence belongs to the UPF0434 family.

This is UPF0434 protein BOV_A0835 from Brucella ovis (strain ATCC 25840 / 63/290 / NCTC 10512).